Consider the following 471-residue polypeptide: Proline and serine-rich protein 2 (471 aa).

Disordered stretches follow at residues Met-1 to Met-46 and Cys-82 to Val-247. Residues Leu-26 to Ser-43 show a composition bias toward low complexity. Ser-43 carries the phosphoserine modification. Thr-45 bears the Phosphothreonine mark. The segment covering Ser-90–His-101 has biased composition (low complexity). Over residues Leu-154 to Ser-177 the composition is skewed to pro residues. 3 positions are modified to phosphoserine: Ser-187, Ser-220, and Ser-223. An Asymmetric dimethylarginine; alternate modification is found at Arg-263. The residue at position 263 (Arg-263) is an Omega-N-methylarginine; alternate. 2 disordered regions span residues Asp-310–Pro-365 and Pro-383–Gly-437. Residues Ser-313–Arg-324 show a composition bias toward basic and acidic residues. Polar residues-rich tracts occupy residues Ala-354–Gln-364 and Pro-383–Ile-393. The segment covering Tyr-415–Lys-427 has biased composition (basic and acidic residues). The residue at position 431 (Ser-431) is a Phosphoserine. Arg-450 bears the Omega-N-methylarginine mark.

The sequence is that of Proline and serine-rich protein 2 (Proser2) from Mus musculus (Mouse).